The primary structure comprises 1033 residues: SIT4-associating protein SAP190 (1033 aa).

Disordered stretches follow at residues 32-82, 147-213, 768-813, and 828-1033; these read DQDD…TTES, PEII…QVET, FGND…HDSG, and ENEE…KEAF. A compositionally biased stretch (basic and acidic residues) spans 158–170; the sequence is ILIERDRKDKKED. Residues 171–182 are compositionally biased toward acidic residues; that stretch reads AEEGGDSEETTN. Residues 183–195 show a composition bias toward basic and acidic residues; that stretch reads DSDHDSGDERSVD. S774 is modified (phosphoserine). Acidic residues-rich tracts occupy residues 784 to 793 and 828 to 838; these read SEDIIGDTEG and ENEEDYAEYSD. 3 positions are modified to phosphoserine: S857, S862, and S892. A compositionally biased stretch (basic and acidic residues) spans 858-879; that stretch reads DDGKSKSAESEFTDKISEHRDG. Polar residues predominate over residues 909–924; the sequence is SRSQPSDPKLQDQNIF. Residues 932 to 944 are compositionally biased toward acidic residues; sequence GVGDDDDYMDPND. Residue T990 is modified to Phosphothreonine. At S991 the chain carries Phosphoserine. The segment covering 1000–1018 has biased composition (acidic residues); sequence ISSDEEDSEDEDEENDMGN.

The protein belongs to the SAPS family. As to quaternary structure, associates with the SIT4 protein phosphatase catalytic subunit in a cell-cycle-dependent manner. Hyperphosphorylated in the absence of SIT4.

Its subcellular location is the cytoplasm. Positive regulator of protein phosphatase SIT4. Involved in the general amino acid control (GAAC) response regulated by TOR. Involved in the dephosphorylation of the elongator complex subunit IKI3. This chain is SIT4-associating protein SAP190 (SAP190), found in Saccharomyces cerevisiae (strain Lalvin EC1118 / Prise de mousse) (Baker's yeast).